Here is a 186-residue protein sequence, read N- to C-terminus: UPF0669 protein C6orf120 homolog (186 aa).

Residues 1-19 (MVPFWAGLLVLSALPQTLG) form the signal peptide. Asn-47 is a glycosylation site (N-linked (GlcNAc...) asparagine). Residues 141–165 (KNSYSSDETPGQPRQSQGPEDTEEE) are disordered. The segment covering 142-159 (NSYSSDETPGQPRQSQGP) has biased composition (polar residues).

Belongs to the UPF0669 family.

It is found in the secreted. This is UPF0669 protein C6orf120 homolog from Danio rerio (Zebrafish).